A 658-amino-acid polypeptide reads, in one-letter code: Translation factor GUF1, mitochondrial (658 aa).

The transit peptide at Met-1–Asn-40 directs the protein to the mitochondrion. In terms of domain architecture, tr-type G spans Asp-60–Val-240. Residues Ala-69 to Ser-76, Asp-133 to His-137, and Asn-187 to Asp-190 contribute to the GTP site.

Belongs to the TRAFAC class translation factor GTPase superfamily. Classic translation factor GTPase family. LepA subfamily.

It localises to the mitochondrion inner membrane. The enzyme catalyses GTP + H2O = GDP + phosphate + H(+). Functionally, promotes mitochondrial protein synthesis. May act as a fidelity factor of the translation reaction, by catalyzing a one-codon backward translocation of tRNAs on improperly translocated ribosomes. Binds to mitochondrial ribosomes in a GTP-dependent manner. The polypeptide is Translation factor GUF1, mitochondrial (Paracoccidioides lutzii (strain ATCC MYA-826 / Pb01) (Paracoccidioides brasiliensis)).